Consider the following 213-residue polypeptide: Riboflavin/roseoflavin transporter RibM (213 aa).

5 consecutive transmembrane segments (helical) span residues 15–35 (HIIW…ALGF), 38–58 (SLWT…AFYG), 107–129 (IAAA…SLSW), 136–158 (YIFV…FWFA), and 171–193 (FANG…LWGM).

The protein belongs to the nicotinamide ribonucleoside (NR) uptake permease (TC 4.B.1) family.

It is found in the cell membrane. Transports riboflavin and roseoflavin. Can also transport FMN and FAD. May confer roseoflavin resistance to S.davawensis, which naturally produces this antibiotic during stationary growth phase. The polypeptide is Riboflavin/roseoflavin transporter RibM (Streptomyces davaonensis (strain DSM 101723 / JCM 4913 / KCC S-0913 / 768)).